Reading from the N-terminus, the 958-residue chain is Protein translocase subunit SecA (958 aa).

ATP-binding positions include Gln86, 104-108 (GEGKT), and Asp494. 2 disordered regions span residues 863-883 (AAAT…AEKT) and 902-937 (QPIS…GTGK). Residues Cys941, Cys943, Cys952, and His953 each coordinate Zn(2+).

This sequence belongs to the SecA family. Monomer and homodimer. Part of the essential Sec protein translocation apparatus which comprises SecA, SecYEG and auxiliary proteins SecDF. Other proteins may also be involved. It depends on Zn(2+) as a cofactor.

Its subcellular location is the cell membrane. It localises to the cytoplasm. The enzyme catalyses ATP + H2O + cellular proteinSide 1 = ADP + phosphate + cellular proteinSide 2.. In terms of biological role, part of the Sec protein translocase complex. Interacts with the SecYEG preprotein conducting channel. Has a central role in coupling the hydrolysis of ATP to the transfer of proteins into and across the cell membrane, serving as an ATP-driven molecular motor driving the stepwise translocation of polypeptide chains across the membrane. This Bifidobacterium adolescentis (strain ATCC 15703 / DSM 20083 / NCTC 11814 / E194a) protein is Protein translocase subunit SecA.